A 375-amino-acid chain; its full sequence is MSKALLVLEDGRVFTGMPFGAIGQTLGEAVFSTGMSGYQETLTDPSYHRQIVVATAPQIGNTGWNDQDGESRDDRIWVAGYAVRDPSPCASNWRATGTLEDELVRQRIVGIAGIDTRAVVRHLRRYGSMKAGVFSGKAMIEPLNIEALVQHVRTQQSMLGADLVGEASTLDAYVVEPKGKERFTVAALDLGIKTNTPRNFARRGIRSYVLPASATFNQIADIKPHGLFLSNGPGDPATADHVVALTREVLNAGIPLFGICFGNQILGRALGLSTYKMVFGHRGINIPVIDHATGRVAVTAQNHGFALEGEAGQSFDTPFGSAVVSHTCANDGVVEGVKLADGRAFSVQYHPEAAAGPHDAEYLFDSFVELMAAQR.

The tract at residues 1–180 (MSKALLVLED…DAYVVEPKGK (180 aa)) is CPSase. Residues S46, G232, and G234 each coordinate L-glutamine. Residues 184 to 375 (TVAALDLGIK…SFVELMAAQR (192 aa)) form the Glutamine amidotransferase type-1 domain. C260 acts as the Nucleophile in catalysis. 5 residues coordinate L-glutamine: F261, Q264, N302, G304, and F305. Active-site residues include H350 and E352.

The protein belongs to the CarA family. Composed of two chains; the small (or glutamine) chain promotes the hydrolysis of glutamine to ammonia, which is used by the large (or ammonia) chain to synthesize carbamoyl phosphate. Tetramer of heterodimers (alpha,beta)4.

The catalysed reaction is hydrogencarbonate + L-glutamine + 2 ATP + H2O = carbamoyl phosphate + L-glutamate + 2 ADP + phosphate + 2 H(+). It catalyses the reaction L-glutamine + H2O = L-glutamate + NH4(+). The protein operates within amino-acid biosynthesis; L-arginine biosynthesis; carbamoyl phosphate from bicarbonate: step 1/1. It functions in the pathway pyrimidine metabolism; UMP biosynthesis via de novo pathway; (S)-dihydroorotate from bicarbonate: step 1/3. In terms of biological role, small subunit of the glutamine-dependent carbamoyl phosphate synthetase (CPSase). CPSase catalyzes the formation of carbamoyl phosphate from the ammonia moiety of glutamine, carbonate, and phosphate donated by ATP, constituting the first step of 2 biosynthetic pathways, one leading to arginine and/or urea and the other to pyrimidine nucleotides. The small subunit (glutamine amidotransferase) binds and cleaves glutamine to supply the large subunit with the substrate ammonia. In Mycobacterium leprae (strain TN), this protein is Carbamoyl phosphate synthase small chain.